We begin with the raw amino-acid sequence, 291 residues long: Acetylglutamate kinase (291 aa).

Residues 64 to 65 (GG), R86, and N190 each bind substrate.

Belongs to the acetylglutamate kinase family. ArgB subfamily.

The protein localises to the cytoplasm. The enzyme catalyses N-acetyl-L-glutamate + ATP = N-acetyl-L-glutamyl 5-phosphate + ADP. It functions in the pathway amino-acid biosynthesis; L-arginine biosynthesis; N(2)-acetyl-L-ornithine from L-glutamate: step 2/4. Its function is as follows. Catalyzes the ATP-dependent phosphorylation of N-acetyl-L-glutamate. The polypeptide is Acetylglutamate kinase (Leptospira borgpetersenii serovar Hardjo-bovis (strain L550)).